Consider the following 444-residue polypeptide: Citrate-proton symporter (444 aa).

Residues 1–41 are Cytoplasmic-facing; sequence MPTARCSMRASSTAPVRMMATAGGARIGAILRVTSGNFLEQ. The helical transmembrane segment at 42 to 62 threads the bilayer; that stretch reads FDFFLFGFYATYIAHTFFPAS. The Periplasmic portion of the chain corresponds to 63 to 72; that stretch reads SEFASLMMTF. Residues 73-93 traverse the membrane as a helical segment; sequence AVFGAGFLMRPIGAIVLGAYI. The Cytoplasmic segment spans residues 94–114; sequence DKVGRRKGLIVTLSIMATGTF. A helical membrane pass occupies residues 115-135; that stretch reads LIVLIPSYQTIGLWAPLLVLI. Residues 136–137 are Periplasmic-facing; it reads GR. A helical membrane pass occupies residues 138–158; sequence LLQGFSAGAELGGVSVYLAEI. The Cytoplasmic segment spans residues 159–177; the sequence is ATPGRKGFYTSWQSGSQQV. The helical transmembrane segment at 178 to 198 threads the bilayer; it reads AIMVAAAMGFALNAVLEPSAI. S199 is a topological domain (periplasmic). A helical membrane pass occupies residues 200 to 220; sequence DWGWRIPFLFGVLIVPFIFIL. The Cytoplasmic portion of the chain corresponds to 221-251; the sequence is RRKLEETQEFTARRHHLAMRQVFATLLANWQ. The chain crosses the membrane as a helical span at residues 252 to 272; it reads VVIAGMMMVAMTTTAFYLITV. The Periplasmic segment spans residues 273-289; the sequence is YAPTFGKKVLMLSASDS. Residues 290–310 form a helical membrane-spanning segment; it reads LLVTLLVAISNFFWLPVGGAL. Residues 311–318 lie on the Cytoplasmic side of the membrane; it reads SDRFGRRS. Residues 319 to 339 traverse the membrane as a helical segment; that stretch reads VLIAMTLLALATAWPALTMLA. Position 340 (N340) is a topological domain, periplasmic. The chain crosses the membrane as a helical span at residues 341-361; that stretch reads APSFLMMLSVLLWLSFIYGMY. Over 362–379 the chain is Cytoplasmic; sequence NGAMIPALTEIMPAEVRV. Residues 380 to 400 form a helical membrane-spanning segment; it reads AGFSLAYSLATAVFGGFTPVI. At 401–411 the chain is on the periplasmic side; it reads STALIEYTGDK. Residues 412 to 432 form a helical membrane-spanning segment; the sequence is ASPGYWMSFAAICGLLATCYL. The Cytoplasmic segment spans residues 433–444; that stretch reads YRRSAVALQTAR.

Belongs to the major facilitator superfamily. Metabolite:H+ Symporter (MHS) family (TC 2.A.1.6) family.

The protein localises to the cell inner membrane. In terms of biological role, uptake of citrate across the boundary membrane with the concomitant transport of protons into the cell (symport system). The polypeptide is Citrate-proton symporter (citH) (Klebsiella pneumoniae).